Here is a 420-residue protein sequence, read N- to C-terminus: uncharacterized protein (420 aa).

The TRAM domain maps to 7–65 (NIERGSVINVEILNAAHGGQGIAKYDGRVIFVKGAFPGDRLSANITHVKKKFARATIAS). 4 residues coordinate S-adenosyl-L-methionine: Q245, Y280, E304, and D349. C376 (nucleophile) is an active-site residue.

Belongs to the class I-like SAM-binding methyltransferase superfamily. RNA M5U methyltransferase family.

This is an uncharacterized protein from Corynebacterium diphtheriae (strain ATCC 700971 / NCTC 13129 / Biotype gravis).